A 466-amino-acid chain; its full sequence is Gastric inhibitory polypeptide receptor (466 aa).

Residues 1-21 (MTTSPILQLLLRLSLCGLLLQ) form the signal peptide. At 22–138 (RAETGSKGQT…DQRLILERLQ (117 aa)) the chain is on the extracellular side. Intrachain disulfides connect Cys46/Cys70, Cys61/Cys103, and Cys84/Cys118. Residues Asn62 and Asn77 are each glycosylated (N-linked (GlcNAc...) asparagine). A helical membrane pass occupies residues 139-161 (VMYTVGYSLSLATLLLALLILSL). The Cytoplasmic portion of the chain corresponds to 162–169 (FRRLHCTR). The helical transmembrane segment at 170–189 (NYIHINLFTSFMLRAAAILS) threads the bilayer. Residues 190–217 (RDRLLPRPGPYLGDQALALWNQALAACR) lie on the Extracellular side of the membrane. The chain crosses the membrane as a helical span at residues 218–242 (TAQIVTQYCVGANYTWLLVEGVYLH). The Cytoplasmic segment spans residues 243 to 254 (SLLVLVGGSEEG). A helical transmembrane segment spans residues 255–278 (HFRYYLLLGWGAPALFVIPWVIVR). Residues 279–293 (YLYENTQCWERNEVK) lie on the Extracellular side of the membrane. The chain crosses the membrane as a helical span at residues 294-319 (AIWWIIRTPILMTILINFLIFIRILG). Residues 320–341 (ILLSKLRTRQMRCRDYRLRLAR) are Cytoplasmic-facing. A helical membrane pass occupies residues 342-362 (STLTLVPLLGVHEVVFAPVTE). Over 363-377 (EQARGALRFAKLGFE) the chain is Extracellular. The helical transmembrane segment at 378–398 (IFLSSFQGFLVSVLYCFINKE) threads the bilayer. Residues 399-466 (VQSEIRRGWH…EASRELESYC (68 aa)) are Cytoplasmic-facing. Positions 427–466 (AFRALPSGSGPGEVPTSRGLSSGTLPGPGNEASRELESYC) are disordered.

The protein belongs to the G-protein coupled receptor 2 family. May form homodimers and heterodimers with GLP1R. N-glycosylation is required for cell surface expression and lengthens receptor half-life by preventing degradation in the ER.

Its subcellular location is the cell membrane. In terms of biological role, this is a receptor for GIP. The activity of this receptor is mediated by G proteins which activate adenylyl cyclase. The protein is Gastric inhibitory polypeptide receptor (GIPR) of Homo sapiens (Human).